Consider the following 502-residue polypeptide: Potassium channel KAT3 (502 aa).

At 1-67 (MPRSSRMNLW…PYDPRYKVWE (67 aa)) the chain is on the cytoplasmic side. A helical transmembrane segment spans residues 68–88 (TFLIILVVYSAWICPLEFAFL). Topologically, residues 89–95 (RYLPSAP) are extracellular. Residues 96-116 (FVVDDVVNGFFAVDIMLTFFV) form a helical membrane-spanning segment. The Cytoplasmic portion of the chain corresponds to 117–138 (PFVDKKSYLLVNDPKKIAVRYL). A helical membrane pass occupies residues 139–159 (SSWFVFDVCSTVPFHSISLLF). Topologically, residues 160 to 169 (NEHGHDLGFK) are extracellular. A helical; Voltage-sensor transmembrane segment spans residues 170-190 (FLNVLRLWRLRRVSSMFARLE). The Cytoplasmic segment spans residues 191-204 (KDIRFNYAVIRCTK). A helical membrane pass occupies residues 205–225 (LISVTLFAIHCAGCINYLIAD). Residues 226 to 252 (RYPDPRRTWIGAVMPNFREDGLWIRYV) are Extracellular-facing. The segment at residues 253-272 (TAMYWSITTLTTTGYGDLHA) is an intramembrane region (pore-forming). The Extracellular segment spans residues 273–276 (ENAR). Residues 277-297 (EMLFGICYMLFNLWLTAYLIG) traverse the membrane as a helical segment. Topologically, residues 298–502 (NMTNLVVHST…IRSNLQQVNV (205 aa)) are cytoplasmic. Residue 381-500 (LFKGVSSRFI…DIIRSNLQQV (120 aa)) participates in a nucleoside 3',5'-cyclic phosphate binding.

The protein belongs to the potassium channel family. Plant (TC 1.A.1.4) subfamily.

It localises to the membrane. In terms of biological role, probable inward-rectifying potassium channel. Assuming opened or closed conformations in response to the voltage difference across the membrane, the channel is activated by hyperpolarization. The protein is Potassium channel KAT3 of Oryza sativa subsp. japonica (Rice).